A 919-amino-acid chain; its full sequence is Isoleucine--tRNA ligase (919 aa).

Residues 59–69 carry the 'HIGH' region motif; that stretch reads PYANGHLHIGH. An L-isoleucyl-5'-AMP-binding site is contributed by Glu-570. The short motif at 611 to 615 is the 'KMSKS' region element; the sequence is KMSKS. Lys-614 is an ATP binding site. Zn(2+)-binding residues include Cys-893, Cys-896, Cys-908, and Cys-911.

Belongs to the class-I aminoacyl-tRNA synthetase family. IleS type 1 subfamily. As to quaternary structure, monomer. Zn(2+) serves as cofactor.

It localises to the cytoplasm. The enzyme catalyses tRNA(Ile) + L-isoleucine + ATP = L-isoleucyl-tRNA(Ile) + AMP + diphosphate. Functionally, catalyzes the attachment of isoleucine to tRNA(Ile). As IleRS can inadvertently accommodate and process structurally similar amino acids such as valine, to avoid such errors it has two additional distinct tRNA(Ile)-dependent editing activities. One activity is designated as 'pretransfer' editing and involves the hydrolysis of activated Val-AMP. The other activity is designated 'posttransfer' editing and involves deacylation of mischarged Val-tRNA(Ile). The polypeptide is Isoleucine--tRNA ligase (Campylobacter curvus (strain 525.92)).